A 446-amino-acid polypeptide reads, in one-letter code: Questin oxidase (446 aa).

This sequence belongs to the questin oxidase family.

It carries out the reaction questin + NADPH + O2 = demethylsulochrin + NADP(+). It functions in the pathway secondary metabolite biosynthesis. Its function is as follows. Questin oxidase; part of the gene cluster that mediates the biosynthesis of geodin, an intermediate in the biosynthesis of other natural products. The pathway begins with the synthesis of atrochrysone thioester by the polyketide synthase (PKS) gedC. The atrochrysone carboxyl ACP thioesterase gedB then breaks the thioester bond and releases the atrochrysone carboxylic acid from gedC. The atrochrysone carboxylic acid is then converted to atrochrysone which is further transformed into emodinanthrone. The next step is performed by the emodinanthrone oxygenase gedH that catalyzes the oxidation of emodinanthrone to emodin. Emodin O-methyltransferase encoded probably by gedA then catalyzes methylation of the 8-hydroxy group of emodin to form questin. Ring cleavage of questin by questin oxidase gedK leads to desmethylsulochrin via several intermediates including questin epoxide. Another methylation step probably catalyzed by methyltransferase gedG leads to the formation of sulochrin which is further converted to dihydrogeodin by the sulochrin halogenase gedL. Finally, the dihydrogeodin oxidase gedJ catalyzes the stereospecific phenol oxidative coupling reaction converting dihydrogeodin to geodin. The protein is Questin oxidase of Aspergillus terreus (strain NIH 2624 / FGSC A1156).